The primary structure comprises 375 residues: Tryptophan--tRNA ligase (375 aa).

The short motif at 81–89 (PSGPVHIGH) is the 'HIGH' region element. The 'KMSKS' region motif lies at 258-262 (KMSAS).

It belongs to the class-I aminoacyl-tRNA synthetase family.

It localises to the cytoplasm. The catalysed reaction is tRNA(Trp) + L-tryptophan + ATP = L-tryptophyl-tRNA(Trp) + AMP + diphosphate + H(+). The sequence is that of Tryptophan--tRNA ligase from Pyrobaculum aerophilum (strain ATCC 51768 / DSM 7523 / JCM 9630 / CIP 104966 / NBRC 100827 / IM2).